The sequence spans 136 residues: NADH-ubiquinone oxidoreductase chain 3 (136 aa).

Helical transmembrane passes span 5–25 (TFFLFLIPVLAIILLAVNLIF), 55–75 (ISFFIFALLFLLFDLEILLVY), and 85–105 (GIYGLVIMLVFFLVGTLGFAF).

This sequence belongs to the complex I subunit 3 family.

The protein localises to the mitochondrion membrane. The enzyme catalyses a ubiquinone + NADH + 5 H(+)(in) = a ubiquinol + NAD(+) + 4 H(+)(out). Functionally, core subunit of the mitochondrial membrane respiratory chain NADH dehydrogenase (Complex I) that is believed to belong to the minimal assembly required for catalysis. Complex I functions in the transfer of electrons from NADH to the respiratory chain. The immediate electron acceptor for the enzyme is believed to be ubiquinone. The polypeptide is NADH-ubiquinone oxidoreductase chain 3 (nd3) (Emericella nidulans (Aspergillus nidulans)).